The chain runs to 187 residues: ECF RNA polymerase sigma factor SigK (187 aa).

A sigma-70 factor domain-2 region spans residues 30–96 (YDHTCTRVYG…RAVDRVRAEQ (67 aa)). Residues 53–56 (ETTQ) carry the Interaction with polymerase core subunit RpoC motif. The segment at 133–182 (CLDGLTDTQRQCIELAYYGGLTYAEVSQRLATNLSTIKSRMRDALRGLRN) is sigma-70 factor domain-4. Residues 155–174 (YAEVSQRLATNLSTIKSRMR) constitute a DNA-binding region (H-T-H motif).

The protein belongs to the sigma-70 factor family. ECF subfamily. In terms of assembly, interacts transiently with the RNA polymerase catalytic core formed by RpoA, RpoB, RpoC and RpoZ (2 alpha, 1 beta, 1 beta' and 1 omega subunit) to form the RNA polymerase holoenzyme that can initiate transcription. Interacts (via sigma-70 factor domain 4) with anti-sigma-K factor RskA.

Its function is as follows. Sigma factors are initiation factors that promote the attachment of RNA polymerase to specific initiation sites and are then released. Extracytoplasmic function (ECF) sigma factors are held in an inactive form by an anti-sigma factor until released by regulated intramembrane proteolysis. This Mycobacterium ulcerans (strain Agy99) protein is ECF RNA polymerase sigma factor SigK (sigK).